The following is a 357-amino-acid chain: Protein pelota homolog (357 aa).

The protein belongs to the eukaryotic release factor 1 family. Pelota subfamily. As to quaternary structure, monomer. A divalent metal cation serves as cofactor.

It is found in the cytoplasm. In terms of biological role, may function in recognizing stalled ribosomes, interact with stem-loop structures in stalled mRNA molecules, and effect endonucleolytic cleavage of the mRNA. May play a role in the release non-functional ribosomes and degradation of damaged mRNAs. Has endoribonuclease activity. The polypeptide is Protein pelota homolog (Thermococcus kodakarensis (strain ATCC BAA-918 / JCM 12380 / KOD1) (Pyrococcus kodakaraensis (strain KOD1))).